A 266-amino-acid polypeptide reads, in one-letter code: 4-diphosphocytidyl-2-C-methyl-D-erythritol kinase (266 aa).

Residue Lys11 is part of the active site. An ATP-binding site is contributed by 103–113; the sequence is PTFAGLGGGSS. Asp145 is a catalytic residue.

The protein belongs to the GHMP kinase family. IspE subfamily.

It carries out the reaction 4-CDP-2-C-methyl-D-erythritol + ATP = 4-CDP-2-C-methyl-D-erythritol 2-phosphate + ADP + H(+). Its pathway is isoprenoid biosynthesis; isopentenyl diphosphate biosynthesis via DXP pathway; isopentenyl diphosphate from 1-deoxy-D-xylulose 5-phosphate: step 3/6. In terms of biological role, catalyzes the phosphorylation of the position 2 hydroxy group of 4-diphosphocytidyl-2C-methyl-D-erythritol. The sequence is that of 4-diphosphocytidyl-2-C-methyl-D-erythritol kinase from Sulfurimonas denitrificans (strain ATCC 33889 / DSM 1251) (Thiomicrospira denitrificans (strain ATCC 33889 / DSM 1251)).